Here is a 400-residue protein sequence, read N- to C-terminus: Acetate kinase (400 aa).

Asparagine 10 contributes to the Mg(2+) binding site. An ATP-binding site is contributed by lysine 17. Arginine 91 lines the substrate pocket. Aspartate 148 functions as the Proton donor/acceptor in the catalytic mechanism. ATP-binding positions include histidine 208–glycine 212, aspartate 283–arginine 285, and glycine 331–asparagine 335. Glutamate 385 is a binding site for Mg(2+).

The protein belongs to the acetokinase family. Homodimer. Mg(2+) serves as cofactor. Mn(2+) is required as a cofactor.

It is found in the cytoplasm. The catalysed reaction is acetate + ATP = acetyl phosphate + ADP. It functions in the pathway metabolic intermediate biosynthesis; acetyl-CoA biosynthesis; acetyl-CoA from acetate: step 1/2. In terms of biological role, catalyzes the formation of acetyl phosphate from acetate and ATP. Can also catalyze the reverse reaction. The sequence is that of Acetate kinase from Shewanella putrefaciens (strain CN-32 / ATCC BAA-453).